Reading from the N-terminus, the 877-residue chain is Leucine--tRNA ligase (877 aa).

Residues 43-53 (PYPSGRIHMGH) carry the 'HIGH' region motif. Positions 628 to 632 (KMSKS) match the 'KMSKS' region motif. Position 631 (Lys631) interacts with ATP.

It belongs to the class-I aminoacyl-tRNA synthetase family.

It localises to the cytoplasm. It carries out the reaction tRNA(Leu) + L-leucine + ATP = L-leucyl-tRNA(Leu) + AMP + diphosphate. The sequence is that of Leucine--tRNA ligase from Brucella abortus (strain S19).